A 90-amino-acid chain; its full sequence is U7-theraphotoxin-Hhn1b (90 aa).

Positions Met-1–Ser-19 are cleaved as a signal peptide. The propeptide occupies Phe-20–Glu-50. Intrachain disulfides connect Cys-51-Cys-65, Cys-58-Cys-70, and Cys-64-Cys-81.

This sequence belongs to the neurotoxin 10 (Hwtx-1) family. 13 (Hntx-13) subfamily. As to expression, expressed by the venom gland.

The protein resides in the secreted. Ion channel inhibitor. This chain is U7-theraphotoxin-Hhn1b, found in Cyriopagopus hainanus (Chinese bird spider).